Here is a 292-residue protein sequence, read N- to C-terminus: uncharacterized protein (292 aa).

The next 5 helical transmembrane spans lie at 57–77 (IISL…LTLI), 101–121 (VYVF…FNFM), 143–163 (LIYA…AVLI), 184–204 (VVIT…NFVL), and 271–291 (IAFL…DRGI).

This sequence belongs to the CbiQ family.

The protein localises to the cell membrane. This is an uncharacterized protein from Methanocaldococcus jannaschii (strain ATCC 43067 / DSM 2661 / JAL-1 / JCM 10045 / NBRC 100440) (Methanococcus jannaschii).